Reading from the N-terminus, the 265-residue chain is Hydroxyethylthiazole kinase (265 aa).

A substrate-binding site is contributed by M36. Residues K112 and S160 each coordinate ATP. Residue G187 participates in substrate binding.

Belongs to the Thz kinase family. It depends on Mg(2+) as a cofactor.

It carries out the reaction 5-(2-hydroxyethyl)-4-methylthiazole + ATP = 4-methyl-5-(2-phosphooxyethyl)-thiazole + ADP + H(+). It functions in the pathway cofactor biosynthesis; thiamine diphosphate biosynthesis; 4-methyl-5-(2-phosphoethyl)-thiazole from 5-(2-hydroxyethyl)-4-methylthiazole: step 1/1. Catalyzes the phosphorylation of the hydroxyl group of 4-methyl-5-beta-hydroxyethylthiazole (THZ). In Clostridium perfringens (strain ATCC 13124 / DSM 756 / JCM 1290 / NCIMB 6125 / NCTC 8237 / Type A), this protein is Hydroxyethylthiazole kinase.